Consider the following 286-residue polypeptide: Soluble epoxide hydrolase (286 aa).

Residues 26–123 (YPLVLLHGWP…DLVERLFILD (98 aa)) form the AB hydrolase-1 domain. The active-site Nucleophile is Asp-99. Residue Tyr-209 is the Proton donor of the active site. The active-site Proton acceptor is the His-264.

It belongs to the AB hydrolase superfamily. Epoxide hydrolase family. Homotetramer.

Its subcellular location is the cytoplasm. It is found in the cell membrane. The enzyme catalyses an epoxide + H2O = an ethanediol. Functionally, involved in catabolic degradation of epoxides. Shows highest activity towards C6 and C7 carbocyclic epoxides. Also active towards linear 1,2-epoxyalkanes. The polypeptide is Soluble epoxide hydrolase (Corynebacterium sp. (strain C12)).